Reading from the N-terminus, the 1490-residue chain is ABC transporter CDR4 (1490 aa).

Positions 1 to 12 are enriched in polar residues; sequence MADADTSSNSSK. 2 disordered regions span residues 1-26 and 53-75; these read MADA…GTYQ and LKRQ…LSGK. At 1-516 the chain is on the cytoplasmic side; it reads MADADTSSNS…NILRIKGNPS (516 aa). Basic and acidic residues predominate over residues 58 to 67; sequence SRQESQKSNE. An ABC transporter 1 domain is found at 151–407; sequence PKYLSLFFRE…FIDMGYECPQ (257 aa). 6 helical membrane passes run 517–537, 551–571, 601–621, 626–646, 659–679, and 767–787; these read IHLF…SIFY, AALF…IFSL, LPTK…MVNF, GNFF…SHIF, AMTP…FVIP, and FGIV…LCEI. Residues 788 to 1182 lie on the Cytoplasmic side of the membrane; the sequence is NKGAMQKGEI…VFEQNWRTPS (395 aa). An ABC transporter 2 domain is found at 846–1090; that stretch reads FFWRDLTYQV…LINYFEKYGA (245 aa). 882 to 889 contacts ATP; that stretch reads GASGAGKT. The next 3 membrane-spanning stretches (helical) occupy residues 1183 to 1203, 1217 to 1237, and 1268 to 1288; these read YLYS…FSFY, FSVF…LPTF, and IPWN…PVGL. N-linked (GlcNAc...) asparagine glycosylation occurs at Asn1291. 3 consecutive transmembrane segments (helical) span residues 1304–1324, 1333–1353, and 1370–1390; these read FMWF…QLCI, AANL…VLVT, and FTYL…VTCA. An N-linked (GlcNAc...) asparagine glycan is attached at Asn1424. Residues 1455-1475 traverse the membrane as a helical segment; that stretch reads IGIYIAFIGINIIGTFILYWF.

This sequence belongs to the ABC transporter superfamily. ABCG family. PDR (TC 3.A.1.205) subfamily.

Its subcellular location is the membrane. This is ABC transporter CDR4 (CDR4) from Candida albicans (Yeast).